The chain runs to 861 residues: Leucine--tRNA ligase (861 aa).

The 'HIGH' region signature appears at 42–52 (PYPSGRLHMGH). A 'KMSKS' region motif is present at residues 619-623 (KMSKS). Lysine 622 provides a ligand contact to ATP.

Belongs to the class-I aminoacyl-tRNA synthetase family.

It is found in the cytoplasm. The catalysed reaction is tRNA(Leu) + L-leucine + ATP = L-leucyl-tRNA(Leu) + AMP + diphosphate. This Haemophilus ducreyi (strain 35000HP / ATCC 700724) protein is Leucine--tRNA ligase.